The sequence spans 473 residues: Kynurenine 3-monooxygenase (473 aa).

Belongs to the aromatic-ring hydroxylase family. KMO subfamily. It depends on FAD as a cofactor.

The protein resides in the mitochondrion outer membrane. It carries out the reaction L-kynurenine + NADPH + O2 + H(+) = 3-hydroxy-L-kynurenine + NADP(+) + H2O. It functions in the pathway cofactor biosynthesis; NAD(+) biosynthesis; quinolinate from L-kynurenine: step 1/3. Its function is as follows. Catalyzes the hydroxylation of L-kynurenine (L-Kyn) to form 3-hydroxy-L-kynurenine (L-3OHKyn). Required for synthesis of quinolinic acid. This Debaryomyces hansenii (strain ATCC 36239 / CBS 767 / BCRC 21394 / JCM 1990 / NBRC 0083 / IGC 2968) (Yeast) protein is Kynurenine 3-monooxygenase.